The primary structure comprises 371 residues: Anhydro-N-acetylmuramic acid kinase (371 aa).

12 to 20 (GTVLDGNID) is an ATP binding site.

Belongs to the anhydro-N-acetylmuramic acid kinase family.

It catalyses the reaction 1,6-anhydro-N-acetyl-beta-muramate + ATP + H2O = N-acetyl-D-muramate 6-phosphate + ADP + H(+). Its pathway is amino-sugar metabolism; 1,6-anhydro-N-acetylmuramate degradation. The protein operates within cell wall biogenesis; peptidoglycan recycling. Its function is as follows. Catalyzes the specific phosphorylation of 1,6-anhydro-N-acetylmuramic acid (anhMurNAc) with the simultaneous cleavage of the 1,6-anhydro ring, generating MurNAc-6-P. Is required for the utilization of anhMurNAc either imported from the medium or derived from its own cell wall murein, and thus plays a role in cell wall recycling. The sequence is that of Anhydro-N-acetylmuramic acid kinase from Rhizobium rhizogenes (strain K84 / ATCC BAA-868) (Agrobacterium radiobacter).